The primary structure comprises 273 residues: Large ribosomal subunit protein uL2 (273 aa).

The interval 228–273 (VDHPHGGGEGKTSGGRHPVTPWGFPTKGKKTRKNKRTSKFIVKKRK) is disordered. Basic residues predominate over residues 254–273 (KGKKTRKNKRTSKFIVKKRK).

It belongs to the universal ribosomal protein uL2 family. As to quaternary structure, part of the 50S ribosomal subunit. Forms a bridge to the 30S subunit in the 70S ribosome.

Functionally, one of the primary rRNA binding proteins. Required for association of the 30S and 50S subunits to form the 70S ribosome, for tRNA binding and peptide bond formation. It has been suggested to have peptidyltransferase activity; this is somewhat controversial. Makes several contacts with the 16S rRNA in the 70S ribosome. This chain is Large ribosomal subunit protein uL2, found in Rickettsia peacockii (strain Rustic).